The following is a 120-amino-acid chain: NAD(P)H-quinone oxidoreductase subunit 3, chloroplastic (120 aa).

3 consecutive transmembrane segments (helical) span residues 9–29 (IFWA…LISG), 64–84 (MFAL…PWAM), and 88–108 (VLGV…ILGL).

It belongs to the complex I subunit 3 family. As to quaternary structure, NDH is composed of at least 16 different subunits, 5 of which are encoded in the nucleus.

It is found in the plastid. The protein resides in the chloroplast thylakoid membrane. It catalyses the reaction a plastoquinone + NADH + (n+1) H(+)(in) = a plastoquinol + NAD(+) + n H(+)(out). The enzyme catalyses a plastoquinone + NADPH + (n+1) H(+)(in) = a plastoquinol + NADP(+) + n H(+)(out). Its function is as follows. NDH shuttles electrons from NAD(P)H:plastoquinone, via FMN and iron-sulfur (Fe-S) centers, to quinones in the photosynthetic chain and possibly in a chloroplast respiratory chain. The immediate electron acceptor for the enzyme in this species is believed to be plastoquinone. Couples the redox reaction to proton translocation, and thus conserves the redox energy in a proton gradient. This chain is NAD(P)H-quinone oxidoreductase subunit 3, chloroplastic, found in Capsella bursa-pastoris (Shepherd's purse).